The following is an 860-amino-acid chain: Leucine--tRNA ligase (860 aa).

Positions 42–52 match the 'HIGH' region motif; that stretch reads PYPSGRLHMGH. The short motif at 619-623 is the 'KMSKS' region element; sequence KMSKS. ATP is bound at residue lysine 622.

The protein belongs to the class-I aminoacyl-tRNA synthetase family.

Its subcellular location is the cytoplasm. The catalysed reaction is tRNA(Leu) + L-leucine + ATP = L-leucyl-tRNA(Leu) + AMP + diphosphate. This chain is Leucine--tRNA ligase, found in Proteus mirabilis (strain HI4320).